The sequence spans 189 residues: uncharacterized protein (189 aa).

This sequence belongs to the mimivirus R457/R459 family.

It is found in the virion. This is an uncharacterized protein from Acanthamoeba polyphaga mimivirus (APMV).